A 375-amino-acid polypeptide reads, in one-letter code: Alanine racemase (375 aa).

Lys-45 (proton acceptor; specific for D-alanine) is an active-site residue. Residue Lys-45 is modified to N6-(pyridoxal phosphate)lysine. Arg-141 contacts substrate. Residue Tyr-270 is the Proton acceptor; specific for L-alanine of the active site. Residue Met-318 participates in substrate binding.

Belongs to the alanine racemase family. The cofactor is pyridoxal 5'-phosphate.

The catalysed reaction is L-alanine = D-alanine. Its pathway is amino-acid biosynthesis; D-alanine biosynthesis; D-alanine from L-alanine: step 1/1. Its function is as follows. Catalyzes the interconversion of L-alanine and D-alanine. May also act on other amino acids. The chain is Alanine racemase (alr) from Pseudoalteromonas atlantica (strain T6c / ATCC BAA-1087).